Here is an 83-residue protein sequence, read N- to C-terminus: Exodeoxyribonuclease 7 small subunit (83 aa).

It belongs to the XseB family. Heterooligomer composed of large and small subunits.

The protein resides in the cytoplasm. The enzyme catalyses Exonucleolytic cleavage in either 5'- to 3'- or 3'- to 5'-direction to yield nucleoside 5'-phosphates.. In terms of biological role, bidirectionally degrades single-stranded DNA into large acid-insoluble oligonucleotides, which are then degraded further into small acid-soluble oligonucleotides. This chain is Exodeoxyribonuclease 7 small subunit, found in Rhodopseudomonas palustris (strain HaA2).